We begin with the raw amino-acid sequence, 251 residues long: Triosephosphate isomerase (251 aa).

9–11 (NWK) is a substrate binding site. Residue His96 is the Electrophile of the active site. The Proton acceptor role is filled by Glu167. Substrate-binding positions include Gly173, Ser213, and 234–235 (GG).

The protein belongs to the triosephosphate isomerase family. As to quaternary structure, homodimer.

The protein resides in the cytoplasm. It catalyses the reaction D-glyceraldehyde 3-phosphate = dihydroxyacetone phosphate. It functions in the pathway carbohydrate biosynthesis; gluconeogenesis. It participates in carbohydrate degradation; glycolysis; D-glyceraldehyde 3-phosphate from glycerone phosphate: step 1/1. Functionally, involved in the gluconeogenesis. Catalyzes stereospecifically the conversion of dihydroxyacetone phosphate (DHAP) to D-glyceraldehyde-3-phosphate (G3P). The sequence is that of Triosephosphate isomerase from Bacteroides fragilis (strain ATCC 25285 / DSM 2151 / CCUG 4856 / JCM 11019 / LMG 10263 / NCTC 9343 / Onslow / VPI 2553 / EN-2).